Consider the following 321-residue polypeptide: tRNA pseudouridine synthase B (321 aa).

The active-site Nucleophile is Asp-47.

The protein belongs to the pseudouridine synthase TruB family. Type 1 subfamily.

The catalysed reaction is uridine(55) in tRNA = pseudouridine(55) in tRNA. Its function is as follows. Responsible for synthesis of pseudouridine from uracil-55 in the psi GC loop of transfer RNAs. In Shewanella baltica (strain OS223), this protein is tRNA pseudouridine synthase B.